A 269-amino-acid polypeptide reads, in one-letter code: Formamidopyrimidine-DNA glycosylase (269 aa).

The Schiff-base intermediate with DNA role is filled by Pro2. Glu3 serves as the catalytic Proton donor. Lys57 acts as the Proton donor; for beta-elimination activity in catalysis. DNA-binding residues include His90, Arg109, and Arg150. The segment at 235 to 269 (NVYGRAGQPCVQCDAILKADRHGQRSTAYCPQCQR) adopts an FPG-type zinc-finger fold. The Proton donor; for delta-elimination activity role is filled by Arg259.

The protein belongs to the FPG family. As to quaternary structure, monomer. Zn(2+) is required as a cofactor.

It carries out the reaction Hydrolysis of DNA containing ring-opened 7-methylguanine residues, releasing 2,6-diamino-4-hydroxy-5-(N-methyl)formamidopyrimidine.. The catalysed reaction is 2'-deoxyribonucleotide-(2'-deoxyribose 5'-phosphate)-2'-deoxyribonucleotide-DNA = a 3'-end 2'-deoxyribonucleotide-(2,3-dehydro-2,3-deoxyribose 5'-phosphate)-DNA + a 5'-end 5'-phospho-2'-deoxyribonucleoside-DNA + H(+). Its function is as follows. Involved in base excision repair of DNA damaged by oxidation or by mutagenic agents. Acts as a DNA glycosylase that recognizes and removes damaged bases. Has a preference for oxidized purines, such as 7,8-dihydro-8-oxoguanine (8-oxoG). Has AP (apurinic/apyrimidinic) lyase activity and introduces nicks in the DNA strand. Cleaves the DNA backbone by beta-delta elimination to generate a single-strand break at the site of the removed base with both 3'- and 5'-phosphates. This chain is Formamidopyrimidine-DNA glycosylase, found in Alcanivorax borkumensis (strain ATCC 700651 / DSM 11573 / NCIMB 13689 / SK2).